The sequence spans 297 residues: MNMLLEINDLNSYDIEFIFDTAIQHFNNSNVSNNSLYGKTIVNLFFESSTRTLSSFEISAKSLGARTVTINVSTSSMNKGESIIDTVLNINAMNPDLIIIRSQYSQFIKEISKYLPNCHIINAGDGHHEHPTQALIDYCTIRYIKGKIHNLNISICGDILHSRVARSNIRLLSRYGANISIVAPPTLICNLKGVSHIHHNFVEGISDSDVIMLLRLQKERMTNFTISSEEEYAYLYMLNSENLSYARSDVIVMHPGPTNKGVEISHYVAEKKSIILLQVKMGVAVRKAILEYLLCHN.

The carbamoyl phosphate site is built by arginine 51 and threonine 52. Lysine 79 provides a ligand contact to L-aspartate. Carbamoyl phosphate is bound by residues arginine 101, histidine 130, and glutamine 133. L-aspartate contacts are provided by arginine 163 and arginine 215. 2 residues coordinate carbamoyl phosphate: glycine 256 and proline 257.

The protein belongs to the aspartate/ornithine carbamoyltransferase superfamily. ATCase family. In terms of assembly, heterododecamer (2C3:3R2) of six catalytic PyrB chains organized as two trimers (C3), and six regulatory PyrI chains organized as three dimers (R2).

The catalysed reaction is carbamoyl phosphate + L-aspartate = N-carbamoyl-L-aspartate + phosphate + H(+). It participates in pyrimidine metabolism; UMP biosynthesis via de novo pathway; (S)-dihydroorotate from bicarbonate: step 2/3. Catalyzes the condensation of carbamoyl phosphate and aspartate to form carbamoyl aspartate and inorganic phosphate, the committed step in the de novo pyrimidine nucleotide biosynthesis pathway. This chain is Aspartate carbamoyltransferase catalytic subunit, found in Ehrlichia ruminantium (strain Gardel).